A 372-amino-acid chain; its full sequence is Glycerol-3-phosphate dehydrogenase [NAD(+)] (372 aa).

Residues 1-16 (MAPSELNCTHQNQHSS) show a composition bias toward polar residues. Residues 1-23 (MAPSELNCTHQNQHSSGYDGPRS) are disordered. Residues 29–34 (GSGNWG), F60, F117, K140, and A173 contribute to the NAD(+) site. K140 contributes to the substrate binding site. The Proton acceptor role is filled by K225. NAD(+) is bound by residues R289, K318, and Q320. 289–290 (RN) contacts substrate.

It belongs to the NAD-dependent glycerol-3-phosphate dehydrogenase family.

It carries out the reaction sn-glycerol 3-phosphate + NAD(+) = dihydroxyacetone phosphate + NADH + H(+). In Cuphea lanceolata (Cigar flower), this protein is Glycerol-3-phosphate dehydrogenase [NAD(+)] (GPDH).